A 271-amino-acid polypeptide reads, in one-letter code: Phosphatidylinositol transfer protein alpha isoform (271 aa).

A 1,2-diacyl-sn-glycero-3-phospho-(1D-myo-inositol)-binding residues include Thr59, Lys61, Glu86, Asn90, Thr97, and Lys195. The residue at position 216 (Lys216) is an N6-acetyllysine. Over residues 251–264 (TKRQLDEMRQKDPV) the composition is skewed to basic and acidic residues. The disordered stretch occupies residues 251-271 (TKRQLDEMRQKDPVKGMTADD).

This sequence belongs to the PtdIns transfer protein family. PI transfer class I subfamily. Phosphorylated by PKC in a calcium and phosphatidylserine-dependent manner.

The protein localises to the cytoplasm. Its subcellular location is the nucleus. The catalysed reaction is a 1,2-diacyl-sn-glycero-3-phosphocholine(in) = a 1,2-diacyl-sn-glycero-3-phosphocholine(out). It catalyses the reaction a 1,2-diacyl-sn-glycero-3-phospho-(1D-myo-inositol)(in) = a 1,2-diacyl-sn-glycero-3-phospho-(1D-myo-inositol)(out). Functionally, catalyzes the transfer of phosphatidylinositol (PI) and phosphatidylcholine (PC) between membranes. Shows a preference for PI and PC containing shorter saturated or monosaturated acyl chains at the sn-1 and sn-2 positions. Preference order for PC is C16:1 &gt; C16:0 &gt; C18:1 &gt; C18:0 &gt; C20:4 and for PI is C16:1 &gt; C16:0 &gt; C18:1 &gt; C18:0 &gt; C20:4 &gt; C20:3. The sequence is that of Phosphatidylinositol transfer protein alpha isoform (Pitpna) from Mus musculus (Mouse).